A 78-amino-acid chain; its full sequence is Small ribosomal subunit protein bS18 (78 aa).

It belongs to the bacterial ribosomal protein bS18 family. In terms of assembly, part of the 30S ribosomal subunit. Forms a tight heterodimer with protein bS6.

Binds as a heterodimer with protein bS6 to the central domain of the 16S rRNA, where it helps stabilize the platform of the 30S subunit. The polypeptide is Small ribosomal subunit protein bS18 (Levilactobacillus brevis (strain ATCC 367 / BCRC 12310 / CIP 105137 / JCM 1170 / LMG 11437 / NCIMB 947 / NCTC 947) (Lactobacillus brevis)).